Consider the following 57-residue polypeptide: Temporin-ALk (57 aa).

Residues 1 to 22 (MFTLKKSLLLLFFLGTINLSLC) form the signal peptide. A propeptide spanning residues 23–46 (EQERNAEEERRDDLGERQAEVEKR) is cleaved from the precursor. Ser-56 carries the serine amide modification.

Belongs to the frog skin active peptide (FSAP) family. Temporin subfamily. Expressed by the skin glands.

It is found in the secreted. In terms of biological role, antimicrobial peptide with weak activity against Gram-positive and Gram-negative bacteria and against fungi. Has been tested against S.aureus (MIC=15.0 ug/mL), B.pumilus (no activity detected), B.cereus (no activity detected), E.coli (MIC=30.0 ug/mL), B.dysenteriae (MIC=60.0 ug/mL), A.cacoaceticus (MIC=75.0 ug/mL), P.aeruginosa (MIC=25.0 ug/mL) and C.albicans (MIC=15.0 ug/mL). Also shows a weak hemolytic activity. In Amolops loloensis (Lolokou Sucker Frog), this protein is Temporin-ALk.